The sequence spans 280 residues: Transcription factor ovo-like homolog lin-48 (280 aa).

4 C2H2-type zinc fingers span residues 133-155 (LTCH…IKCH), 161-183 (YLCT…TRTH), 189-212 (YKCE…RKVH), and 228-251 (FVCE…KVVH).

The protein localises to the nucleus. Transcription factor. Involved in development of the hindgut, the male tail, and the excretory duct cell. Involved in modulating function of excretory duct cells. Plays a role in left/right patterning of cell fates in the hindgut. This is Transcription factor ovo-like homolog lin-48 from Caenorhabditis elegans.